We begin with the raw amino-acid sequence, 397 residues long: Acetate kinase (397 aa).

Asparagine 8 contacts Mg(2+). An ATP-binding site is contributed by lysine 15. Arginine 89 lines the substrate pocket. Aspartate 146 acts as the Proton donor/acceptor in catalysis. Residues 206 to 210 (HVGNG), 283 to 285 (DMR), and 331 to 335 (GMGEN) each bind ATP. Glutamate 383 is a Mg(2+) binding site.

This sequence belongs to the acetokinase family. As to quaternary structure, homodimer. Requires Mg(2+) as cofactor. Mn(2+) serves as cofactor.

It is found in the cytoplasm. The catalysed reaction is acetate + ATP = acetyl phosphate + ADP. The protein operates within metabolic intermediate biosynthesis; acetyl-CoA biosynthesis; acetyl-CoA from acetate: step 1/2. Its function is as follows. Catalyzes the formation of acetyl phosphate from acetate and ATP. Can also catalyze the reverse reaction. The polypeptide is Acetate kinase (Streptococcus agalactiae serotype III (strain NEM316)).